Consider the following 251-residue polypeptide: Hydroxyacylglutathione hydrolase (251 aa).

Residues His-53, His-55, Asp-57, His-58, His-110, Asp-127, and His-165 each contribute to the Zn(2+) site.

This sequence belongs to the metallo-beta-lactamase superfamily. Glyoxalase II family. In terms of assembly, monomer. Zn(2+) serves as cofactor.

The enzyme catalyses an S-(2-hydroxyacyl)glutathione + H2O = a 2-hydroxy carboxylate + glutathione + H(+). It functions in the pathway secondary metabolite metabolism; methylglyoxal degradation; (R)-lactate from methylglyoxal: step 2/2. Functionally, thiolesterase that catalyzes the hydrolysis of S-D-lactoyl-glutathione to form glutathione and D-lactic acid. This is Hydroxyacylglutathione hydrolase from Escherichia coli O9:H4 (strain HS).